A 266-amino-acid polypeptide reads, in one-letter code: Ribonuclease 3 (266 aa).

Residues 8–130 (LARLTKKLGY…IIGAVYLDSN (123 aa)) enclose the RNase III domain. E43 contacts Mg(2+). D47 is a catalytic residue. Mg(2+)-binding residues include D116 and E119. Residue E119 is part of the active site. In terms of domain architecture, DRBM spans 157–227 (DPKTRLQEFL…AQQILALIEK (71 aa)). The interval 229–266 (REQEKEVKIKPTKQAKLANPRHTKSNPSSSSKKSSTRK) is disordered. Residues 253–266 (SNPSSSSKKSSTRK) are compositionally biased toward low complexity.

It belongs to the ribonuclease III family. In terms of assembly, homodimer. Mg(2+) serves as cofactor.

Its subcellular location is the cytoplasm. It catalyses the reaction Endonucleolytic cleavage to 5'-phosphomonoester.. Functionally, digests double-stranded RNA. Involved in the processing of primary rRNA transcript to yield the immediate precursors to the large and small rRNAs (23S and 16S). Processes some mRNAs, and tRNAs when they are encoded in the rRNA operon. Processes pre-crRNA and tracrRNA of type II CRISPR loci if present in the organism. The protein is Ribonuclease 3 of Colwellia psychrerythraea (strain 34H / ATCC BAA-681) (Vibrio psychroerythus).